A 142-amino-acid chain; its full sequence is Universal stress protein C (142 aa).

Belongs to the universal stress protein A family.

Its subcellular location is the cytoplasm. In terms of biological role, required for resistance to DNA-damaging agents. The polypeptide is Universal stress protein C (uspC) (Escherichia coli (strain K12)).